The primary structure comprises 546 residues: Chaperonin GroEL (546 aa).

ATP contacts are provided by residues 30–33, Lys51, 87–91, Gly415, and Asp495; these read TLGP and DGTTT.

The protein belongs to the chaperonin (HSP60) family. In terms of assembly, forms a cylinder of 14 subunits composed of two heptameric rings stacked back-to-back. Interacts with the co-chaperonin GroES.

Its subcellular location is the cytoplasm. The catalysed reaction is ATP + H2O + a folded polypeptide = ADP + phosphate + an unfolded polypeptide.. In terms of biological role, together with its co-chaperonin GroES, plays an essential role in assisting protein folding. The GroEL-GroES system forms a nano-cage that allows encapsulation of the non-native substrate proteins and provides a physical environment optimized to promote and accelerate protein folding. This is Chaperonin GroEL from Brucella melitensis biotype 1 (strain ATCC 23456 / CCUG 17765 / NCTC 10094 / 16M).